The sequence spans 227 residues: Lipoprotein-releasing system ATP-binding protein LolD (227 aa).

Positions 6–227 constitute an ABC transporter domain; sequence LVLDDIQKSY…RLDEGVLVSA (222 aa). 43 to 50 lines the ATP pocket; it reads APSGAGKS.

Belongs to the ABC transporter superfamily. Lipoprotein translocase (TC 3.A.1.125) family. The complex is composed of two ATP-binding proteins (LolD) and two transmembrane proteins (LolC and LolE).

It is found in the cell inner membrane. Its function is as follows. Part of the ABC transporter complex LolCDE involved in the translocation of mature outer membrane-directed lipoproteins, from the inner membrane to the periplasmic chaperone, LolA. Responsible for the formation of the LolA-lipoprotein complex in an ATP-dependent manner. This is Lipoprotein-releasing system ATP-binding protein LolD from Jannaschia sp. (strain CCS1).